Consider the following 469-residue polypeptide: 3-isopropylmalate dehydratase large subunit (469 aa).

Residues Cys347, Cys407, and Cys410 each coordinate [4Fe-4S] cluster.

The protein belongs to the aconitase/IPM isomerase family. LeuC type 1 subfamily. In terms of assembly, heterodimer of LeuC and LeuD. The cofactor is [4Fe-4S] cluster.

The enzyme catalyses (2R,3S)-3-isopropylmalate = (2S)-2-isopropylmalate. It participates in amino-acid biosynthesis; L-leucine biosynthesis; L-leucine from 3-methyl-2-oxobutanoate: step 2/4. Its function is as follows. Catalyzes the isomerization between 2-isopropylmalate and 3-isopropylmalate, via the formation of 2-isopropylmaleate. The chain is 3-isopropylmalate dehydratase large subunit from Prochlorococcus marinus (strain NATL1A).